We begin with the raw amino-acid sequence, 548 residues long: Glutamate--tRNA ligase (548 aa).

A 'HIGH' region motif is present at residues 102-112 (PSPSGPLHIGH).

Belongs to the class-I aminoacyl-tRNA synthetase family. Glutamate--tRNA ligase type 2 subfamily.

It localises to the cytoplasm. The enzyme catalyses tRNA(Glu) + L-glutamate + ATP = L-glutamyl-tRNA(Glu) + AMP + diphosphate. Functionally, catalyzes the attachment of glutamate to tRNA(Glu) in a two-step reaction: glutamate is first activated by ATP to form Glu-AMP and then transferred to the acceptor end of tRNA(Glu). The sequence is that of Glutamate--tRNA ligase from Thermoplasma acidophilum (strain ATCC 25905 / DSM 1728 / JCM 9062 / NBRC 15155 / AMRC-C165).